Reading from the N-terminus, the 198-residue chain is Methyl-coenzyme M reductase operon protein C (198 aa).

MCR is composed of three subunits: alpha, beta, and gamma. The function of proteins C and D is not known.

This Methanococcus vannielii protein is Methyl-coenzyme M reductase operon protein C (mcrC).